The following is a 198-amino-acid chain: Recombination protein RecR (198 aa).

A C4-type zinc finger spans residues 57 to 72 (CSVCGNLTDEDPCSIC). The 96-residue stretch at 80–175 (SMILVVEDSK…KVTRLARGLA (96 aa)) folds into the Toprim domain.

Belongs to the RecR family.

Its function is as follows. May play a role in DNA repair. It seems to be involved in an RecBC-independent recombinational process of DNA repair. It may act with RecF and RecO. In Streptococcus uberis (strain ATCC BAA-854 / 0140J), this protein is Recombination protein RecR.